The chain runs to 361 residues: Phospho-N-acetylmuramoyl-pentapeptide-transferase (361 aa).

10 consecutive transmembrane segments (helical) span residues Arg-25–Ile-45, Thr-73–Leu-93, Val-98–Ile-118, Ile-139–Thr-159, Ile-168–Phe-188, Gly-200–Ser-220, Ala-237–Phe-257, Val-264–Ile-284, Met-289–Val-309, and Val-339–Lys-359.

Belongs to the glycosyltransferase 4 family. MraY subfamily. Mg(2+) serves as cofactor.

It localises to the cell inner membrane. The enzyme catalyses UDP-N-acetyl-alpha-D-muramoyl-L-alanyl-gamma-D-glutamyl-meso-2,6-diaminopimeloyl-D-alanyl-D-alanine + di-trans,octa-cis-undecaprenyl phosphate = di-trans,octa-cis-undecaprenyl diphospho-N-acetyl-alpha-D-muramoyl-L-alanyl-D-glutamyl-meso-2,6-diaminopimeloyl-D-alanyl-D-alanine + UMP. It participates in cell wall biogenesis; peptidoglycan biosynthesis. Its function is as follows. Catalyzes the initial step of the lipid cycle reactions in the biosynthesis of the cell wall peptidoglycan: transfers peptidoglycan precursor phospho-MurNAc-pentapeptide from UDP-MurNAc-pentapeptide onto the lipid carrier undecaprenyl phosphate, yielding undecaprenyl-pyrophosphoryl-MurNAc-pentapeptide, known as lipid I. This chain is Phospho-N-acetylmuramoyl-pentapeptide-transferase, found in Xanthomonas oryzae pv. oryzae (strain MAFF 311018).